The sequence spans 239 residues: 7-cyano-7-deazaguanine synthase (239 aa).

Phe8–Leu18 contacts ATP. Zn(2+)-binding residues include Cys194, Cys209, Cys212, and Cys215.

Belongs to the QueC family.

It catalyses the reaction 7-carboxy-7-deazaguanine + NH4(+) + ATP = 7-cyano-7-deazaguanine + ADP + phosphate + H2O + H(+). Its pathway is purine metabolism; 7-cyano-7-deazaguanine biosynthesis. Catalyzes the ATP-dependent conversion of 7-carboxy-7-deazaguanine (CDG) to 7-cyano-7-deazaguanine (preQ(0)). This Pyrococcus abyssi (strain GE5 / Orsay) protein is 7-cyano-7-deazaguanine synthase.